We begin with the raw amino-acid sequence, 130 residues long: Small ribosomal subunit protein uS8 (130 aa).

Belongs to the universal ribosomal protein uS8 family. In terms of assembly, part of the 30S ribosomal subunit. Contacts proteins S5 and S12.

Functionally, one of the primary rRNA binding proteins, it binds directly to 16S rRNA central domain where it helps coordinate assembly of the platform of the 30S subunit. This is Small ribosomal subunit protein uS8 from Pseudomonas aeruginosa (strain UCBPP-PA14).